The following is a 106-amino-acid chain: Minor capsid protein VP2 (106 aa).

Belongs to the vesivirus VP2 protein family. As to quaternary structure, homooligomer. The portal-like structure consists in 12 copies of VP2. Interacts with capsid protein VP1.

It is found in the virion. Its subcellular location is the host cytoplasm. In terms of biological role, minor structural protein that forms a portal-like structure at a unique three-fold axis of symmetry, following binding to the host receptor. The virion attaches to feline junctional adhesion molecule A (F11R). Once attached, the virion is endocytosed. Acidification of the endosome induces conformational change of capsid protein thereby injecting virus genomic RNA into host cytoplasm. The channel formed by VP2 may allow the delivery of the viral genome through the host endosomal membrane. This Feline calicivirus (strain Cat/United States/Urbana/1960) (FCV) protein is Minor capsid protein VP2.